Consider the following 335-residue polypeptide: Beta-ketoacyl-[acyl-carrier-protein] synthase III (335 aa).

Active-site residues include cysteine 117 and histidine 258. The tract at residues 259 to 263 (QANQR) is ACP-binding. Asparagine 288 is a catalytic residue.

It belongs to the thiolase-like superfamily. FabH family. Homodimer.

The protein localises to the cytoplasm. It catalyses the reaction malonyl-[ACP] + acetyl-CoA + H(+) = 3-oxobutanoyl-[ACP] + CO2 + CoA. The protein operates within lipid metabolism; fatty acid biosynthesis. Its function is as follows. Catalyzes the condensation reaction of fatty acid synthesis by the addition to an acyl acceptor of two carbons from malonyl-ACP. Catalyzes the first condensation reaction which initiates fatty acid synthesis and may therefore play a role in governing the total rate of fatty acid production. Possesses both acetoacetyl-ACP synthase and acetyl transacylase activities. Its substrate specificity determines the biosynthesis of branched-chain and/or straight-chain of fatty acids. The sequence is that of Beta-ketoacyl-[acyl-carrier-protein] synthase III from Synechococcus elongatus (strain ATCC 33912 / PCC 7942 / FACHB-805) (Anacystis nidulans R2).